A 393-amino-acid polypeptide reads, in one-letter code: Lipid-A-disaccharide synthase (393 aa).

Belongs to the LpxB family.

It carries out the reaction a lipid X + a UDP-2-N,3-O-bis[(3R)-3-hydroxyacyl]-alpha-D-glucosamine = a lipid A disaccharide + UDP + H(+). It participates in bacterial outer membrane biogenesis; LPS lipid A biosynthesis. In terms of biological role, condensation of UDP-2,3-diacylglucosamine and 2,3-diacylglucosamine-1-phosphate to form lipid A disaccharide, a precursor of lipid A, a phosphorylated glycolipid that anchors the lipopolysaccharide to the outer membrane of the cell. The polypeptide is Lipid-A-disaccharide synthase (Bordetella petrii (strain ATCC BAA-461 / DSM 12804 / CCUG 43448)).